A 212-amino-acid chain; its full sequence is Leucine efflux protein (212 aa).

Helical transmembrane passes span 12–32 (TYLV…LFVL), 49–69 (GVFI…ATLI), 71–91 (TTPI…LYLG), 122–142 (ILSL…VQFI), 153–173 (FFIL…FLII), and 188–208 (LAKV…ARLA).

This sequence belongs to the Rht family.

It is found in the cell inner membrane. The catalysed reaction is L-leucine(in) + H(+)(out) = L-leucine(out) + H(+)(in). In terms of biological role, exporter of leucine. This chain is Leucine efflux protein (leuE), found in Shigella sonnei (strain Ss046).